The sequence spans 1168 residues: Probable serine/threonine protein kinase IRE (1168 aa).

Disordered stretches follow at residues 1–165 and 377–444; these read MSTT…GVES and EKQN…KIQP. Residues 16–25 show a composition bias toward low complexity; the sequence is PTTISTPTST. Basic and acidic residues-rich tracts occupy residues 39–54 and 107–130; these read RHSD…KTDE and QDDK…DARA. 2 stretches are compositionally biased toward polar residues: residues 146-163 and 401-414; these read QWSQ…NPGV and TARS…NFRM. The C2H2-type; atypical zinc finger occupies 488–507; that stretch reads CRICEVEIPVVHVEEHSRIC. Disordered regions lie at residues 546–566, 602–622, and 717–744; these read PRAV…DLDE, GTKD…PRNS, and SSNA…LNPR. Residues 754 to 1043 form the Protein kinase domain; it reads FEIIKPISRG…AGEVKQHHFF (290 aa). ATP-binding positions include 760–768 and Lys783; that span reads ISRGAFGRV. The active-site Proton acceptor is the Asp877. One can recognise an AGC-kinase C-terminal domain in the interval 1044-1144; the sequence is KDINWDTLAR…KNLSQLASIN (101 aa).

It belongs to the protein kinase superfamily. AGC Ser/Thr protein kinase family. Highly expressed in roots, elongating root hair cells and pollen grains.

The catalysed reaction is L-seryl-[protein] + ATP = O-phospho-L-seryl-[protein] + ADP + H(+). It carries out the reaction L-threonyl-[protein] + ATP = O-phospho-L-threonyl-[protein] + ADP + H(+). Functionally, modulates root tip growth. May play a common role in the tip growth of plant cells. In Arabidopsis thaliana (Mouse-ear cress), this protein is Probable serine/threonine protein kinase IRE.